A 99-amino-acid polypeptide reads, in one-letter code: Plastocyanin (99 aa).

Residues 1-99 enclose the Plastocyanin-like domain; it reads IEVLLGGGDG…AGMVGKVTVN (99 aa). Cu cation is bound by residues His-37, Cys-84, His-87, and Met-92.

It belongs to the plastocyanin family. The cofactor is Cu(2+).

The protein resides in the plastid. Its subcellular location is the chloroplast thylakoid membrane. Its function is as follows. Participates in electron transfer between P700 and the cytochrome b6-f complex in photosystem I. In Capsella bursa-pastoris (Shepherd's purse), this protein is Plastocyanin (PETE).